We begin with the raw amino-acid sequence, 743 residues long: UvrABC system protein C (743 aa).

In terms of domain architecture, GIY-YIG spans 16–95 (VDPGVYKFRD…IKEFDPRFNV (80 aa)). Residues 208-243 (DKLVRQLEARMQQASEELDFETAARLRDDVGALRRA) form the UVR domain. Disordered stretches follow at residues 497–543 (AEAA…QTGR) and 694–743 (PSAD…TGVE). A compositionally biased stretch (acidic residues) spans 506–520 (QASDTDGDQVSDTDG). Positions 734–743 (QSASQRTGVE) are enriched in polar residues.

The protein belongs to the UvrC family. As to quaternary structure, interacts with UvrB in an incision complex.

It localises to the cytoplasm. The UvrABC repair system catalyzes the recognition and processing of DNA lesions. UvrC both incises the 5' and 3' sides of the lesion. The N-terminal half is responsible for the 3' incision and the C-terminal half is responsible for the 5' incision. This chain is UvrABC system protein C, found in Rhodococcus opacus (strain B4).